Consider the following 199-residue polypeptide: Proteasome subunit beta type-2-B (199 aa).

The residue at position 1 (methionine 1) is an N-acetylmethionine.

The protein belongs to the peptidase T1B family. In terms of assembly, component of the 20S core complex of the 26S proteasome. The 26S proteasome is composed of a core protease (CP), known as the 20S proteasome, capped at one or both ends by the 19S regulatory particle (RP/PA700). The 20S proteasome core is composed of 28 subunits that are arranged in four stacked rings, resulting in a barrel-shaped structure. The two end rings are each formed by seven alpha subunits, and the two central rings are each formed by seven beta subunits. The catalytic chamber with the active sites is on the inside of the barrel. Ubiquitous low levels, higher expression in siliques and flowers.

It localises to the cytoplasm. Its subcellular location is the nucleus. Non-catalytic component of the proteasome, a multicatalytic proteinase complex which is characterized by its ability to cleave peptides with Arg, Phe, Tyr, Leu, and Glu adjacent to the leaving group at neutral or slightly basic pH. The proteasome has an ATP-dependent proteolytic activity. The sequence is that of Proteasome subunit beta type-2-B (PBD2) from Arabidopsis thaliana (Mouse-ear cress).